The chain runs to 500 residues: Lysine--tRNA ligase (500 aa).

Positions 410 and 417 each coordinate Mg(2+).

Belongs to the class-II aminoacyl-tRNA synthetase family. Homodimer. Mg(2+) serves as cofactor.

Its subcellular location is the cytoplasm. It catalyses the reaction tRNA(Lys) + L-lysine + ATP = L-lysyl-tRNA(Lys) + AMP + diphosphate. This chain is Lysine--tRNA ligase, found in Shewanella amazonensis (strain ATCC BAA-1098 / SB2B).